The following is a 97-amino-acid chain: Acylphosphatase (97 aa).

Positions 5–92 (RAHVWISGRV…GEFVRFEITF (88 aa)) constitute an Acylphosphatase-like domain. Residues R20 and N38 contribute to the active site.

The protein belongs to the acylphosphatase family.

The enzyme catalyses an acyl phosphate + H2O = a carboxylate + phosphate + H(+). The sequence is that of Acylphosphatase (acyP) from Syntrophobacter fumaroxidans (strain DSM 10017 / MPOB).